We begin with the raw amino-acid sequence, 45 residues long: Large ribosomal subunit protein bL34 (45 aa).

The protein belongs to the bacterial ribosomal protein bL34 family.

This is Large ribosomal subunit protein bL34 from Paenarthrobacter aurescens (strain TC1).